We begin with the raw amino-acid sequence, 418 residues long: Caveolae-associated protein 2 (418 aa).

The disordered stretch occupies residues 1-42 (MGEDAAQAEKFQHPNTDMLQEKPSSPSPMPSSTPSPSLNLGS). G2 carries the post-translational modification N-acetylglycine. An interaction with CAVIN1 region spans residues 2-168 (GEDAAQAEKF…IFQEESEIPA (167 aa)). 4 positions are modified to phosphoserine: S27, S35, S37, and S51. Coiled coils occupy residues 61–87 (LLDK…INLE) and 126–268 (RAVR…VERR). A leucine-zipper region spans residues 62-100 (LDKLVNMLDAVRENQHNMEQRQINLEGSVKGIQNDLTKL). Residue T196 is modified to Phosphothreonine. Disordered stretches follow at residues 200-238 (VDLS…SLKK) and 262-382 (IVSV…ALQQ). Phosphoserine occurs at positions 203, 204, and 218. A compositionally biased stretch (acidic residues) spans 203-219 (SSDDELPRDEEALEDSA). Residues 220-238 (EEKMEESRAEKIKRSSLKK) are compositionally biased toward basic and acidic residues. A compositionally biased stretch (polar residues) spans 275–287 (LTPNHQKASSGKS). Phosphoserine occurs at positions 283, 284, 287, 288, 293, and 296. Basic and acidic residues predominate over residues 303-321 (REGESSVENETKLEDQMQE). Phosphoserine occurs at positions 327, 336, 359, and 363. A compositionally biased stretch (polar residues) spans 355–366 (RGNNSAVGSNAD). At T368 the chain carries Phosphothreonine. Positions 368–377 (TIEEDEEEEP) are enriched in acidic residues. Y388 carries the phosphotyrosine modification. S390 and S396 each carry phosphoserine. Residues 396-418 (SEEMEEPSEKQVQPAVLHVDQTA) are disordered.

The protein belongs to the CAVIN family. Component of the CAVIN complex composed of CAVIN1, CAVIN2, CAVIN3 and CAVIN4. Binds to PRKCA in the presence of phosphatidylserine. Interacts with CAVIN4; this augments the transactivation of NPPA by CAVIN4. Interacts with CAVIN1. Interacts with CAV3. Post-translationally, the N-terminus is blocked. Heart, adipose tissue, lung and endothelial cells (at protein level). Highly expressed in kidney and expressed at lower levels in liver, spleen, thymus, stomach, intestine and uterus.

It localises to the cytoplasm. The protein localises to the cytosol. It is found in the membrane. Its subcellular location is the caveola. Plays an important role in caveolar biogenesis and morphology. Regulates caveolae morphology by inducing membrane curvature within caveolae. Plays a role in caveola formation in a tissue-specific manner. Required for the formation of caveolae in the lung and fat endothelia but not in the heart endothelia. Negatively regulates the size or stability of CAVIN complexes in the lung endothelial cells. May play a role in targeting PRKCA to caveolae. The polypeptide is Caveolae-associated protein 2 (Cavin2) (Mus musculus (Mouse)).